We begin with the raw amino-acid sequence, 211 residues long: tRNA (guanine-N(7)-)-methyltransferase (211 aa).

E44, D69, D96, and D118 together coordinate S-adenosyl-L-methionine. The active site involves D118. K122 is a substrate binding site. Residues 124-129 (RHEKRR) form an interaction with RNA region. Substrate contacts are provided by residues D154 and 191–194 (TEYE).

This sequence belongs to the class I-like SAM-binding methyltransferase superfamily. TrmB family.

It carries out the reaction guanosine(46) in tRNA + S-adenosyl-L-methionine = N(7)-methylguanosine(46) in tRNA + S-adenosyl-L-homocysteine. It participates in tRNA modification; N(7)-methylguanine-tRNA biosynthesis. Catalyzes the formation of N(7)-methylguanine at position 46 (m7G46) in tRNA. This chain is tRNA (guanine-N(7)-)-methyltransferase, found in Streptococcus pneumoniae (strain CGSP14).